The sequence spans 766 residues: Ent-copalyl diphosphate synthase 3 (766 aa).

The N-terminal 30 residues, 1-30, are a transit peptide targeting the chloroplast; the sequence is FRSTAAGRCLPVTCCVFPRHFRVSSSSILP. Lys-222 is a substrate binding site. Mg(2+)-binding residues include Asp-354 and Asp-356. The DXDD motif signature appears at 354–357; that stretch reads DVDD. A substrate-binding site is contributed by Lys-440.

The protein belongs to the terpene synthase family. Tpsc subfamily. Mg(2+) serves as cofactor. As to expression, accumulates in leaves, and, at low levels, in germinating seeds.

It localises to the plastid. The protein localises to the chloroplast. The catalysed reaction is (2E,6E,10E)-geranylgeranyl diphosphate = ent-copalyl diphosphate. It functions in the pathway plant hormone biosynthesis; gibberellin biosynthesis. Its pathway is secondary metabolite biosynthesis; terpenoid biosynthesis. Functionally, involved in the biosynthesis of ent-kaurene diterpenoids natural products such as oridonin, miltiradiene, eriocalyxin B and nezukol, known to exhibit antitumor, anti-inflammatory and antibacterial activities, and in the production of gibberellins phytohormones. Catalyzes the conversion of (2E,6E,10E)-geranylgeranyl diphosphate (GGPP) to ent-copalyl diphosphate (ent-CPP). The polypeptide is Ent-copalyl diphosphate synthase 3 (Isodon eriocalyx (Plectranthus eriocalyx)).